The chain runs to 380 residues: Alcohol dehydrogenase 1 (380 aa).

Zn(2+) contacts are provided by cysteine 48, threonine 50, histidine 70, cysteine 100, cysteine 103, cysteine 106, cysteine 114, and cysteine 178. An alcohol-binding residues include threonine 50 and histidine 70. Residue threonine 50 coordinates NAD(+). NAD(+) contacts are provided by residues 203–208 (GLGAVG), aspartate 227, arginine 232, threonine 273, valine 296, 296–298 (VGV), and arginine 373.

This sequence belongs to the zinc-containing alcohol dehydrogenase family. As to quaternary structure, homodimer. It depends on Zn(2+) as a cofactor.

Its subcellular location is the cytoplasm. It catalyses the reaction a primary alcohol + NAD(+) = an aldehyde + NADH + H(+). The catalysed reaction is a secondary alcohol + NAD(+) = a ketone + NADH + H(+). This chain is Alcohol dehydrogenase 1, found in Pisum sativum (Garden pea).